We begin with the raw amino-acid sequence, 152 residues long: Lipoprotein signal peptidase (152 aa).

A run of 3 helical transmembrane segments spans residues 5–25, 61–81, and 84–104; these read LFVL…FWIV, WFFV…LATH, and LNIW…GNFI. Active-site residues include Asp114 and Asp130. A helical transmembrane segment spans residues 125-145; that stretch reads IFNVADSYLTVGVILLVICLW.

Belongs to the peptidase A8 family.

The protein resides in the cell membrane. It carries out the reaction Release of signal peptides from bacterial membrane prolipoproteins. Hydrolyzes -Xaa-Yaa-Zaa-|-(S,diacylglyceryl)Cys-, in which Xaa is hydrophobic (preferably Leu), and Yaa (Ala or Ser) and Zaa (Gly or Ala) have small, neutral side chains.. The protein operates within protein modification; lipoprotein biosynthesis (signal peptide cleavage). In terms of biological role, this protein specifically catalyzes the removal of signal peptides from prolipoproteins. The polypeptide is Lipoprotein signal peptidase (Streptococcus pyogenes serotype M3 (strain ATCC BAA-595 / MGAS315)).